Here is a 747-residue protein sequence, read N- to C-terminus: 3',5'-cyclic-AMP phosphodiesterase 4D (747 aa).

The tract at residues 1-28 (MERDTCDVLSRSKSASEETLHSCNEEED) is disordered. Positions 14–24 (SASEETLHSCN) are enriched in basic and acidic residues. A phosphoserine mark is found at S238, S240, S287, and S314. Positions 282–302 (EVEIPSPTQKEKEKKKRPMSQ) are disordered. In terms of domain architecture, PDEase spans 325–654 (VKTEQEDVLA…EWYQSTIPQS (330 aa)). K326 is covalently cross-linked (Glycyl lysine isopeptide (Lys-Gly) (interchain with G-Cter in SUMO)). Residue H401 is the Proton donor of the active site. H401 lines the 3',5'-cyclic AMP pocket. AMP is bound at residue H401. Zn(2+) contacts are provided by H405, H441, D442, and D559. AMP is bound by residues D442, D559, N562, Q610, and F613. D442 is a Mg(2+) binding site. A Mn(2+)-binding site is contributed by D442. Positions 610 and 613 each coordinate 3',5'-cyclic AMP. The segment at 649 to 747 (STIPQSPSPA…CVPDDCCPDT (99 aa)) is disordered. The span at 701 to 712 (CSDSKTLCTQDS) shows a compositional bias: polar residues. A compositionally biased stretch (acidic residues) spans 718-734 (PLDEQVEEEAVAEEESQ).

The protein belongs to the cyclic nucleotide phosphodiesterase family. PDE4 subfamily. Homodimer for the long isoforms. Isoforms with truncated N-termini are monomeric. Binds ARRB2. Interacts with PDE4DIP. Identified in a complex composed of RYR1, PDE4D, PKA, FKBP1A and protein phosphatase 1 (PP1). Interacts (via N-terminal region) with SHANK2 (via proline-rich region); the interaction is increased in a PKA-dependent manner. Requires Zn(2+) as cofactor. It depends on Mg(2+) as a cofactor. Mn(2+) is required as a cofactor. Sumoylation of long isoforms by PIAS4 augments their activation by PKA phosphorylation and represses their inhibition by ERK phosphorylation. In terms of tissue distribution, expressed in brain (at protein level). Isoform 7 is detected in heart, brain, lung, kidney and testis.

Its subcellular location is the cytoplasm. The protein localises to the membrane. The protein resides in the cytoskeleton. It is found in the microtubule organizing center. It localises to the centrosome. Its subcellular location is the apical cell membrane. The enzyme catalyses 3',5'-cyclic AMP + H2O = AMP + H(+). The protein operates within purine metabolism; 3',5'-cyclic AMP degradation; AMP from 3',5'-cyclic AMP: step 1/1. With respect to regulation, inhibited by rolipram. Activated by phosphatidic acid. Functionally, hydrolyzes the second messenger cAMP, which is a key regulator of many important physiological processes. This Mus musculus (Mouse) protein is 3',5'-cyclic-AMP phosphodiesterase 4D (Pde4d).